Reading from the N-terminus, the 122-residue chain is Large ribosomal subunit protein uL14c (122 aa).

Belongs to the universal ribosomal protein uL14 family. As to quaternary structure, part of the 50S ribosomal subunit.

The protein resides in the plastid. It localises to the chloroplast. In terms of biological role, binds to 23S rRNA. In Fagopyrum esculentum subsp. ancestrale (Wild buckwheat), this protein is Large ribosomal subunit protein uL14c.